Here is a 352-residue protein sequence, read N- to C-terminus: Thiosulfate transporter TsuA (352 aa).

A helical membrane pass occupies residues 1-21; that stretch reads MFSMILSGLICGALLGFVMQR. Residues 22 to 44 lie on the Cytoplasmic side of the membrane; it reads GRFCLTGGFRDMYIVKNNRMFYA. The helical transmembrane segment at 45 to 65 threads the bilayer; sequence LLIAISVQSVGVFALIQAGLL. Over 66-70 the chain is Periplasmic; that stretch reads TYEAG. The helical transmembrane segment at 71 to 91 threads the bilayer; that stretch reads AFPWLGTVIGGYIFGLGIVLA. At 92 to 102 the chain is on the cytoplasmic side; sequence GGCATGTWYRA. A helical membrane pass occupies residues 103 to 123; sequence GEGLIGSWIALFTYMVMSAVM. The Periplasmic portion of the chain corresponds to 124 to 148; sequence RSPHASGLNQTLQHYSTEHNSIAET. A helical membrane pass occupies residues 149–169; that stretch reads FNLSVWPLVAVLLVITLWVVM. The Cytoplasmic portion of the chain corresponds to 170-197; it reads KELKKPKLKVATLPPRRTGIAHILFEKR. Residues 198–218 form a helical membrane-spanning segment; it reads WHPFVTAVLIGLIALLAWPLS. The Periplasmic portion of the chain corresponds to 219–247; the sequence is EATGRMFGLGITSPTANILQFLVAGDMKY. Residues 248 to 268 form a helical membrane-spanning segment; the sequence is INWGVFLVLGIFVGSFIAAKA. At 269–289 the chain is on the cytoplasmic side; the sequence is SREFRVRAADAQTTLRSGLGG. A helical transmembrane segment spans residues 290-310; that stretch reads VLMGFGASIAGGCSIGNGLVM. Topologically, residues 311 to 317 are periplasmic; that stretch reads TAMMTWQ. A helical transmembrane segment spans residues 318–338; it reads GWIGLVFMILGVWTASWLVYV. The Cytoplasmic segment spans residues 339-352; the sequence is RPQRKARLATAAAN.

This sequence belongs to the TsuA/YedE (TC 9.B.102) family.

The protein resides in the cell inner membrane. The enzyme catalyses thiosulfate(in) = thiosulfate(out). Functionally, mediates thiosulfate uptake. The protein is Thiosulfate transporter TsuA of Escherichia coli (strain K12).